Reading from the N-terminus, the 260-residue chain is MRLLVTLILLIFVLTVSGQYSCSNPCYGNMCCSIPSNNEYYLTTFCDESTACGTPCSAQTYFTADSQRFGCGVTLTICSTSGGSTTTGGTGSAGTSTSSGSGSGSGSGSGSGSGSGSGTSGSSSSGSSSGSGSGSSSGSGGSSGSGSGSTMETGGFYGVCVKAITIDAGPNISVEEEAGMAIIDASSQICQDLFGSSSCGWSDKRSITAVQSSVEDGFPVNKPFNVTFEDYNKIISNSLILDQQCSNKNNCKYNKLELMK.

A signal peptide spans 1 to 19 (MRLLVTLILLIFVLTVSGQ). A disordered region spans residues 83–148 (GSTTTGGTGS…SGGSSGSGSG (66 aa)). 2 stretches are compositionally biased toward gly residues: residues 101–119 (SGSG…GSGT) and 129–147 (SGSG…GSGS).

Belongs to the dictyostelium lysozyme family. In terms of processing, contains disulfide bonds.

The protein resides in the cytoplasmic vesicle lumen. The enzyme catalyses Hydrolysis of (1-&gt;4)-beta-linkages between N-acetylmuramic acid and N-acetyl-D-glucosamine residues in a peptidoglycan and between N-acetyl-D-glucosamine residues in chitodextrins.. Has antibacterial activity. This is Lysozyme D (alyD-1) from Dictyostelium discoideum (Social amoeba).